Consider the following 313-residue polypeptide: Olfactory receptor 4M1 (313 aa).

Over M1–L25 the chain is Extracellular. N5 carries N-linked (GlcNAc...) asparagine glycosylation. The chain crosses the membrane as a helical span at residues V26–I49. Residues R50–S57 lie on the Cytoplasmic side of the membrane. A helical membrane pass occupies residues P58–P79. Residues K80–Q100 are Extracellular-facing. A disulfide bridge connects residues C97 and C189. A helical transmembrane segment spans residues L101 to Y120. The Cytoplasmic segment spans residues D121–R139. A helical membrane pass occupies residues L140–I158. The Extracellular portion of the chain corresponds to Q159–E195. A helical transmembrane segment spans residues E196–A219. Residues F220–R237 are Cytoplasmic-facing. Residues A238 to Y260 traverse the membrane as a helical segment. The Extracellular portion of the chain corresponds to A261–K271. The helical transmembrane segment at V272–L291 threads the bilayer. Over R292–K313 the chain is Cytoplasmic.

Belongs to the G-protein coupled receptor 1 family. Highly expressed in the testis and olfactory bulb.

It localises to the cell membrane. Functionally, olfactory receptor that acts as a receptor of Asprosin hormone, potentially at the surface of hepatocytes and may help to promote hepatocyte glucose release. The sequence is that of Olfactory receptor 4M1 from Homo sapiens (Human).